A 367-amino-acid chain; its full sequence is C-X-C chemokine receptor type 3 (367 aa).

The Extracellular segment spans residues 1-56; it reads MYLEVSERQVLDASDIAFLLENSTSPYDYGENESDFSDSPPCPQDFSLNFDRTFLP. Asn-22 carries an N-linked (GlcNAc...) asparagine glycan. Sulfotyrosine is present on residues Tyr-27 and Tyr-29. N-linked (GlcNAc...) asparagine glycosylation is present at Asn-32. The chain crosses the membrane as a helical span at residues 57-77; that stretch reads VLYSLLFLLGLLGNGAVAAVL. Residues 78-89 are Cytoplasmic-facing; it reads LSQRTALSSTDT. Residues 90–110 form a helical membrane-spanning segment; it reads FLLHLAVADVLLVLTLPLWAV. The Extracellular portion of the chain corresponds to 111 to 125; that stretch reads DAAAQWVFGSGLCKV. Cys-123 and Cys-202 are oxidised to a cystine. A helical transmembrane segment spans residues 126–146; the sequence is AGALFNINFYAGAFLLACISF. Topologically, residues 147-168 are cytoplasmic; the sequence is DRYLSIVHATQIYRRDPWVRVA. A helical transmembrane segment spans residues 169 to 189; sequence LTCIVVWGLCVLFALPDFIFL. Topologically, residues 190 to 222 are extracellular; it reads SASHDQRLNATHCQYNFPQVGRTALRVLQLVAG. Residue Asn-198 is glycosylated (N-linked (GlcNAc...) asparagine). The helical transmembrane segment at 223–243 threads the bilayer; that stretch reads FLMPLLVMAYCYAHILAVLLV. The Cytoplasmic portion of the chain corresponds to 244-255; it reads SRGQRRFRAMRL. The chain crosses the membrane as a helical span at residues 256-276; that stretch reads VVVVVVAFAVCWTPYHLVVLV. At 277-300 the chain is on the extracellular side; that stretch reads DILMDVGVLARNCGRESHVDVAKS. The chain crosses the membrane as a helical span at residues 301–321; sequence VTSGMGYMHCCLNPLLYAFVG. Topologically, residues 322–367 are cytoplasmic; it reads VKFKEQMWMLLMRLGRSDQRGPQRQPSSSRRESSWSETTEASYLGL. Residues 339-367 are disordered; that stretch reads DQRGPQRQPSSSRRESSWSETTEASYLGL.

The protein belongs to the G-protein coupled receptor 1 family. In terms of assembly, homomer. Forms heteromers with ACKR4. Interacts with PF4/CXCL4. Post-translationally, sulfation on Tyr-27 and Tyr-29 is essential for CXCL10 binding. N-glycosylated.

The protein resides in the cell membrane. Functionally, receptor for the C-X-C chemokine CXCL9, CXCL10 and CXCL11 and mediates the proliferation, survival and angiogenic activity of mesangial cells through a heterotrimeric G-protein signaling pathway. Probably promotes cell chemotaxis response. Binds to CCL21. Upon activation by PF4, induces activated T-lymphocytes migration mediated via downstream Ras/extracellular signal-regulated kinase (ERK) signaling. The polypeptide is C-X-C chemokine receptor type 3 (Cxcr3) (Rattus norvegicus (Rat)).